A 326-amino-acid polypeptide reads, in one-letter code: MTQRIAITPGEPAGVGPDLIITIAQQDWPVEMVVIASKALLQERSKALSLPLTIIDYDQHAPAKSQKSGSLTVLDVELTEPCVPGTLNSANGSYVVETLRIASEKNISGEFDAIVTGPVHKGLINKAGIAFSGHTEYFATQANCSDVVMMLATKGLRVALVTTHIPLAYVSKAITYERLQKVTRILHKDLQEKFGIKSPKIYACGINPHAGEDGHLGREEIEIMEPAFAELRADGIDIIGPLPADTIFQEKYLAEADAILAMYHDQGLPVLKYKGFGSSVNITLGLPFIRTSVDHGTALELAGKGTADSGSFIEAMNNAINLASNK.

Positions 134 and 135 each coordinate substrate. A divalent metal cation-binding residues include H164, H209, and H264. Residues K272, N281, and R290 each coordinate substrate.

Belongs to the PdxA family. Homodimer. Zn(2+) is required as a cofactor. Mg(2+) serves as cofactor. It depends on Co(2+) as a cofactor.

Its subcellular location is the cytoplasm. It carries out the reaction 4-(phosphooxy)-L-threonine + NAD(+) = 3-amino-2-oxopropyl phosphate + CO2 + NADH. It functions in the pathway cofactor biosynthesis; pyridoxine 5'-phosphate biosynthesis; pyridoxine 5'-phosphate from D-erythrose 4-phosphate: step 4/5. Its function is as follows. Catalyzes the NAD(P)-dependent oxidation of 4-(phosphooxy)-L-threonine (HTP) into 2-amino-3-oxo-4-(phosphooxy)butyric acid which spontaneously decarboxylates to form 3-amino-2-oxopropyl phosphate (AHAP). This Colwellia psychrerythraea (strain 34H / ATCC BAA-681) (Vibrio psychroerythus) protein is 4-hydroxythreonine-4-phosphate dehydrogenase.